The sequence spans 536 residues: Small conductance calcium-activated potassium channel protein 1 (536 aa).

Positions 1-90 are disordered; sequence MSSRSHNGSV…KPPTVSHRLG (90 aa). A compositionally biased stretch (acidic residues) spans 65–75; it reads QEEEEEEEDED. The chain crosses the membrane as a helical span at residues 107–127; the sequence is LIFGMFGIVVMVTETELSWGV. The chain crosses the membrane as a helical span at residues 136 to 156; it reads FALKCLISLSTVILLGLVILY. Residues 224–244 form a helical membrane-spanning segment; sequence VLLSIPMFLRLYLLARVMLLH. The chain crosses the membrane as a helical span at residues 273–293; the sequence is LMTICPGTVLLVFSISSWIVA. The chain crosses the membrane as a helical span at residues 313–333; it reads FLGAMWLISITFLSIGYGDMV. The pore-forming intramembrane region spans 342–362; it reads VCLLTGIMGAGCTALVVAVVA. Positions 380–459 are calmodulin-binding; the sequence is DTQLTKRVKN…LADLAKAQSI (80 aa). A helical transmembrane segment spans residues 487-507; that stretch reads VLGASLQALPSLIAQAICPLP. Residues 514–536 are disordered; the sequence is SHLTTAAQSPQSHWLPTTASDCG. Over residues 515-536 the composition is skewed to polar residues; sequence HLTTAAQSPQSHWLPTTASDCG.

It belongs to the potassium channel KCNN family. KCa2.1/KCNN1 subfamily. In terms of assembly, homodimer. Heteromultimer with KCNN2 and KCNN3. The complex is composed of 4 channel subunits each of which binds to a calmodulin subunit which regulates the channel activity through calcium-binding. Interacts with calmodulin. As to expression, widely expressed including brain.

Its subcellular location is the membrane. The protein resides in the cytoplasm. It is found in the myofibril. It localises to the sarcomere. The protein localises to the z line. The enzyme catalyses K(+)(in) = K(+)(out). Inhibited by bee venom neurotoxin apamin. Inhibited by d-tubocurarine and tetraethylammonium (TEA). Its function is as follows. Small conductance calcium-activated potassium channel that mediates the voltage-independent transmembrane transfer of potassium across the cell membrane through a constitutive interaction with calmodulin which binds the intracellular calcium allowing its opening. The current is characterized by a voltage-independent activation, an intracellular calcium concentration increase-dependent activation and a single-channel conductance of about 3 picosiemens. Also presents an inwardly rectifying current, thus reducing its already small outward conductance of potassium ions, which is particularly the case when the membrane potential displays positive values, above + 20 mV. Activation is followed by membrane hyperpolarization. Thought to regulate neuronal excitability by contributing to the slow component of synaptic afterhyperpolarization. In Rattus norvegicus (Rat), this protein is Small conductance calcium-activated potassium channel protein 1.